Here is a 230-residue protein sequence, read N- to C-terminus: MDKQLLIFDFDGTLIDSVPDLADAVNAMLTTLGKAPYPIDTIRNWVGNGSRMLVERALVGKIEVSEGELAKETIDHAEQVFFDAYSKMGGSKTVAYPNVDSGLKKLKAAGFKLALVTNKPIRFVPKILQFFGWHDIFSEVLGGDSLPTKKPDPAPLLHVCEVLNINPAQAVMIGDSINDILAGQNANMDTLGLSYGYNYGQDIRQLNPTEAFDDFSALVDYLLKAYPANN.

The active-site Nucleophile is Asp9. Mg(2+) contacts are provided by Asp9, Asp11, and Asp175.

The protein belongs to the HAD-like hydrolase superfamily. CbbY/CbbZ/Gph/YieH family. The cofactor is Mg(2+).

The enzyme catalyses 2-phosphoglycolate + H2O = glycolate + phosphate. The protein operates within organic acid metabolism; glycolate biosynthesis; glycolate from 2-phosphoglycolate: step 1/1. Specifically catalyzes the dephosphorylation of 2-phosphoglycolate. Is involved in the dissimilation of the intracellular 2-phosphoglycolate formed during the DNA repair of 3'-phosphoglycolate ends, a major class of DNA lesions induced by oxidative stress. This Psychrobacter arcticus (strain DSM 17307 / VKM B-2377 / 273-4) protein is Phosphoglycolate phosphatase.